Consider the following 901-residue polypeptide: Dipeptidyl-aminopeptidase B (901 aa).

Residues 1–22 (MSSPRPSTSSTSSDSGLSVDTT) show a composition bias toward low complexity. Positions 1-67 (MSSPRPSTSS…EPFLPSAKKQ (67 aa)) are disordered. Topologically, residues 1–76 (MSSPRPSTSS…QAASGSRTSR (76 aa)) are cytoplasmic. The chain crosses the membrane as a helical; Signal-anchor for type II membrane protein span at residues 77–97 (LIWGLVILCVAGWLWGLVLFV). At 98–901 (TQNRSAQQSV…VKRSLPMLVN (804 aa)) the chain is on the vacuolar side. N-linked (GlcNAc...) asparagine glycosylation is found at N334 and N625. S739 serves as the catalytic Charge relay system. Residue N793 is glycosylated (N-linked (GlcNAc...) asparagine). Catalysis depends on charge relay system residues D816 and H849.

Belongs to the peptidase S9B family.

Its subcellular location is the vacuole membrane. The enzyme catalyses Release of an N-terminal dipeptide, Xaa-Yaa-|-Zaa-, from a polypeptide, preferentially when Yaa is Pro, provided Zaa is neither Pro nor hydroxyproline.. In terms of biological role, type IV dipeptidyl-peptidase which removes N-terminal dipeptides sequentially from polypeptides having unsubstituted N-termini provided that the penultimate residue is proline. In Aspergillus niger, this protein is Dipeptidyl-aminopeptidase B (dapB).